The sequence spans 353 residues: ATP-dependent kinase YFH7 (353 aa).

Residue 31–39 coordinates ATP; sequence GSPGSGKST.

It belongs to the YFH7 family.

Functionally, ATP-dependent kinase that could be involved in endoplasmic reticulum membrane assembly. This Saccharomyces cerevisiae (strain Lalvin EC1118 / Prise de mousse) (Baker's yeast) protein is ATP-dependent kinase YFH7 (YFH7).